Here is a 444-residue protein sequence, read N- to C-terminus: Phosphoglucosamine mutase (444 aa).

The active-site Phosphoserine intermediate is Ser104. Ser104, Asp243, Asp245, and Asp247 together coordinate Mg(2+). Ser104 carries the phosphoserine modification.

The protein belongs to the phosphohexose mutase family. Mg(2+) is required as a cofactor. Post-translationally, activated by phosphorylation.

The catalysed reaction is alpha-D-glucosamine 1-phosphate = D-glucosamine 6-phosphate. In terms of biological role, catalyzes the conversion of glucosamine-6-phosphate to glucosamine-1-phosphate. In Neisseria meningitidis serogroup B (strain ATCC BAA-335 / MC58), this protein is Phosphoglucosamine mutase.